Consider the following 503-residue polypeptide: Ribose import ATP-binding protein RbsA (503 aa).

2 ABC transporter domains span residues 10–246 and 256–500; these read LEVR…VGRD and VEPG…TGSE. 42–49 contacts ATP; that stretch reads GENGAGKS.

Belongs to the ABC transporter superfamily. Ribose importer (TC 3.A.1.2.1) family. As to quaternary structure, the complex is composed of an ATP-binding protein (RbsA), two transmembrane proteins (RbsC) and a solute-binding protein (RbsB).

Its subcellular location is the cell membrane. It catalyses the reaction D-ribose(out) + ATP + H2O = D-ribose(in) + ADP + phosphate + H(+). In terms of biological role, part of the ABC transporter complex RbsABC involved in ribose import. Responsible for energy coupling to the transport system. This chain is Ribose import ATP-binding protein RbsA, found in Rhodococcus jostii (strain RHA1).